We begin with the raw amino-acid sequence, 148 residues long: Aspartate carbamoyltransferase regulatory chain (148 aa).

Zn(2+) contacts are provided by C106, C111, C134, and C137.

Belongs to the PyrI family. In terms of assembly, contains catalytic and regulatory chains. Zn(2+) is required as a cofactor.

Functionally, involved in allosteric regulation of aspartate carbamoyltransferase. The polypeptide is Aspartate carbamoyltransferase regulatory chain (Methanococcus maripaludis (strain C6 / ATCC BAA-1332)).